The following is an 858-amino-acid chain: Polyhomeotic-like protein 2 (858 aa).

Disordered regions lie at residues 1–76, 230–307, 337–388, 407–444, 473–493, and 529–561; these read MENE…QYLQ, QQTP…MEGR, PQPS…VALQ, LQCP…PHTP, KEVA…SPHQ, and TDLS…KPPQ. 2 stretches are compositionally biased toward low complexity: residues 10–34 and 230–241; these read TSSS…NSSS and QQTPAAAASGPT. The interval 33-53 is interaction with BMI1; sequence SSGGSGRPTGPQISVYSGIPD. Residues 265-274 show a composition bias toward polar residues; it reads PAQSRNTAQA. Over residues 337 to 358 the composition is skewed to low complexity; it reads PQPSSKHLQPQFVIQQQPQPQQ. Polar residues predominate over residues 379 to 388; sequence ASVSPSVALQ. The span at 473–483 shows a compositional bias: basic and acidic residues; the sequence is KEVAPGEKSVP. Residues 537–551 show a composition bias toward low complexity; the sequence is TSGNGNSASSIAGTA. The short motif at 558 to 587 is the HD1 element; it reads KPPQAIVKPQILTHVIEGFVIQEGAEPFPV. Glycyl lysine isopeptide (Lys-Gly) (interchain with G-Cter in SUMO2) cross-links involve residues lysine 598 and lysine 600. Threonine 619 bears the Phosphothreonine mark. At serine 621 the chain carries Phosphoserine. Lysine 632 participates in a covalent cross-link: Glycyl lysine isopeptide (Lys-Gly) (interchain with G-Cter in SUMO2). Residues 633–667 form an FCS-type zinc finger; that stretch reads EEGAPLKLKCELCGRVDFAYKFKRSKRFCSMACAK. Cysteine 642, cysteine 645, cysteine 661, and cysteine 665 together coordinate Zn(2+). 2 disordered regions span residues 688–720 and 732–768; these read QKAG…TGTV and HSQE…GQRD. A Glycyl lysine isopeptide (Lys-Gly) (interchain with G-Cter in SUMO2) cross-link involves residue lysine 702. The residue at position 751 (serine 751) is a Phosphoserine. Residues 794–858 form the SAM domain; the sequence is WNVEDVYEFI…YARISMLKDS (65 aa). A Glycyl lysine isopeptide (Lys-Gly) (interchain with G-Cter in SUMO2) cross-link involves residue lysine 847.

Component of a PRC1-like complex. Interacts with CBX4. Interacts with BMI1, PCGF2, PHC1 and RNF2. Interacts with CHTOP. Interacts with the N-terminal region of the SP1 transcription factor and with MAPKAPK2. Interacts with SAMD7 and SAMD11.

The protein resides in the nucleus. Functionally, component of a Polycomb group (PcG) multiprotein PRC1-like complex, a complex class required to maintain the transcriptionally repressive state of many genes, including Hox genes, throughout development. PcG PRC1 complex acts via chromatin remodeling and modification of histones; it mediates monoubiquitination of histone H2A 'Lys-119', rendering chromatin heritably changed in its expressibility. The sequence is that of Polyhomeotic-like protein 2 (PHC2) from Homo sapiens (Human).